Consider the following 458-residue polypeptide: D-inositol 3-phosphate glycosyltransferase (458 aa).

His16 contributes to the 1D-myo-inositol 3-phosphate binding site. UDP-N-acetyl-alpha-D-glucosamine-binding positions include 22–23 (QP) and Gly30. 1D-myo-inositol 3-phosphate-binding positions include 27 to 32 (DAGGMN), Lys85, Tyr118, Thr142, and Arg162. 3 residues coordinate UDP-N-acetyl-alpha-D-glucosamine: Arg236, Lys241, and Gln302. The Mg(2+) site is built by Tyr311, Arg312, and Ser314. UDP-N-acetyl-alpha-D-glucosamine is bound by residues Glu324 and Glu332. Thr338 serves as a coordination point for Mg(2+). Residues 428–458 (VAAQNVTGSSSRTRRPWRRRRSTLLPMTGRS) are disordered. Over residues 439–449 (RTRRPWRRRRS) the composition is skewed to basic residues.

It belongs to the glycosyltransferase group 1 family. MshA subfamily. Homodimer.

It catalyses the reaction 1D-myo-inositol 3-phosphate + UDP-N-acetyl-alpha-D-glucosamine = 1D-myo-inositol 2-acetamido-2-deoxy-alpha-D-glucopyranoside 3-phosphate + UDP + H(+). Functionally, catalyzes the transfer of a N-acetyl-glucosamine moiety to 1D-myo-inositol 3-phosphate to produce 1D-myo-inositol 2-acetamido-2-deoxy-glucopyranoside 3-phosphate in the mycothiol biosynthesis pathway. This Gordonia bronchialis (strain ATCC 25592 / DSM 43247 / BCRC 13721 / JCM 3198 / KCTC 3076 / NBRC 16047 / NCTC 10667) (Rhodococcus bronchialis) protein is D-inositol 3-phosphate glycosyltransferase.